Consider the following 992-residue polypeptide: Meckelin (992 aa).

An N-terminal signal peptide occupies residues 1–35 (MVMRTRPLAAMAVRSCFSALTGTVYLLLVLCEVSW). Residues 36 to 516 (AQIFSFPFQR…SVKYEMNQGD (481 aa)) lie on the Extracellular side of the membrane. The cysteine-rich stretch occupies residues 37-280 (QIFSFPFQRP…FHYVFEGAAG (244 aa)). 12 disulfides stabilise this stretch: Cys-49–Cys-62, Cys-65–Cys-78, Cys-80–Cys-97, Cys-100–Cys-114, Cys-117–Cys-127, Cys-129–Cys-150, Cys-153–Cys-170, Cys-173–Cys-184, Cys-186–Cys-197, Cys-237–Cys-246, Cys-253–Cys-268, and Cys-354–Cys-375. N-linked (GlcNAc...) asparagine glycosylation is present at Asn-242. Residues 517-545 (AFVQTDIALGVLGGLAVLSSLLKTAGWKR) traverse the membrane as a helical segment. At 546–555 (RIGSPMIDLQ) the chain is on the cytoplasmic side. The helical transmembrane segment at 556–587 (TVMKFLLYYAGDLANVFFIITVGTGLYWLIFF) threads the bilayer. The Extracellular segment spans residues 588–600 (KAQKSVSVLLPMP). A helical membrane pass occupies residues 601–628 (VQEERFVTYVGCAFAMKALQFLHKLISQ). The Cytoplasmic portion of the chain corresponds to 629 to 667 (ITIDIFFIDWERPKGKVLKAVEGEGGVRSATVPVSIWRT). An intramembrane region (helical) is located at residues 668–676 (YFVANEWNE). A discontinuously helical membrane pass occupies residues 668-698 (YFVANEWNEIQTVRKINPLFQVLTTLFFLEV). Residues 677-685 (IQTVRKINP) lie within the membrane without spanning it. An intramembrane region (helical) is located at residues 686 to 698 (LFQVLTTLFFLEV). The Extracellular segment spans residues 699–728 (VGFKNLALMDPSSSLSRSLSDYAAPYSRIL). The helical intramembrane region spans 729–754 (RYAVATTIWLVIGIVQVVFFAAFYER). Residues 729 to 768 (RYAVATTIWLVIGIVQVVFFAAFYERFIEDKIRQFVDLCS) form a discontinuously helical membrane-spanning segment. The stretch at 755-759 (FIEDK) is an intramembrane region. Residues 760 to 768 (IRQFVDLCS) constitute an intramembrane region (helical). Residues 769 to 923 (MSNVSVFLLS…SIFYNDESHS (155 aa)) are Cytoplasmic-facing. The helical intramembrane region spans 924–926 (FSS). The discontinuously helical transmembrane segment at 924-949 (FSSVLYYGNEATLLIFDLLFFCVVDL) threads the bilayer. Residues 927-933 (VLYYGNE) lie within the membrane without spanning it. Positions 934-949 (ATLLIFDLLFFCVVDL) form an intramembrane region, helical. Residues 950 to 954 (ACQNF) are Extracellular-facing. A helical transmembrane segment spans residues 955–982 (VLASFLTYLQQEIFRFIRNTVGQKNLAT). Topologically, residues 983–992 (KTLVDERFLI) are cytoplasmic.

In terms of assembly, homodimer. Part of the tectonic-like complex (also named B9 complex). Interacts with DNAJB9, DNAJC10 and mutated SFTPC. Interacts with SYNE2 during the early establishment of cell polarity. Interacts (via C-terminus) with FLNA. Interacts with TMEM218. Interacts with WNT5A. Interacts with ROR2.

The protein resides in the cell membrane. The protein localises to the endoplasmic reticulum membrane. It localises to the cytoplasm. It is found in the cytoskeleton. Its subcellular location is the cilium basal body. In terms of biological role, part of the tectonic-like complex which is required for tissue-specific ciliogenesis and may regulate ciliary membrane composition. Involved in centrosome migration to the apical cell surface during early ciliogenesis. Required for ciliary structure and function, including a role in regulating length and appropriate number through modulating centrosome duplication. Is a key regulator of stereociliary bundle orientation. Required for epithelial cell branching morphology. Essential for endoplasmic reticulum-associated degradation (ERAD) of surfactant protein C (sftpc). Involved in the negative regulation of canonical Wnt signaling, and activation of the non-canonical cascade stimulated by WNT5A. In non-canonical Wnt signaling, it may act as ROR2 coreceptor. The protein is Meckelin (Tmem67) of Rattus norvegicus (Rat).